Here is a 202-residue protein sequence, read N- to C-terminus: uncharacterized protein (202 aa).

Positions 1–20 are disordered; sequence MVGAVTQIADRPTDPSPWSP. Residues 19 to 79 enclose the HTH tetR-type domain; the sequence is SPRETELLAV…AAFIEGIRQV (61 aa).

This is an uncharacterized protein from Mycobacterium bovis (strain ATCC BAA-935 / AF2122/97).